Consider the following 457-residue polypeptide: ATP synthase subunit beta (457 aa).

147 to 154 is an ATP binding site; that stretch reads GGAGVGKT.

The protein belongs to the ATPase alpha/beta chains family. In terms of assembly, F-type ATPases have 2 components, CF(1) - the catalytic core - and CF(0) - the membrane proton channel. CF(1) has five subunits: alpha(3), beta(3), gamma(1), delta(1), epsilon(1). CF(0) has three main subunits: a(1), b(2) and c(9-12). The alpha and beta chains form an alternating ring which encloses part of the gamma chain. CF(1) is attached to CF(0) by a central stalk formed by the gamma and epsilon chains, while a peripheral stalk is formed by the delta and b chains.

The protein localises to the cell inner membrane. It carries out the reaction ATP + H2O + 4 H(+)(in) = ADP + phosphate + 5 H(+)(out). Produces ATP from ADP in the presence of a proton gradient across the membrane. The catalytic sites are hosted primarily by the beta subunits. This chain is ATP synthase subunit beta, found in Histophilus somni (strain 129Pt) (Haemophilus somnus).